The sequence spans 328 residues: Sphingolipid delta(4)-desaturase DES1-like (328 aa).

Transmembrane regions (helical) follow at residues 50 to 70, 78 to 98, and 114 to 134; these read PLAFLKIAAVVSLQLWTATLL, ILTVAYFFGSFLNHNLFLAIH, and WLGIFANLPIGVPMSITFQKY. Positions 98 to 102 match the Histidine box-1 motif; the sequence is HELSH. The Histidine box-2 signature appears at 135 to 139; the sequence is HLEHH. Helical transmembrane passes span 164–184, 192–212, and 217–237; these read LSKSVWVVFQLFFYALRPLFL, WEFTNLIIQIALDASMVYFFG, and AYLILSTFVGGGMHPMAGHFI. A Histidine box-3 motif is present at residues 266-270; the sequence is HNEHH.

This sequence belongs to the fatty acid desaturase type 1 family. DEGS subfamily.

Its subcellular location is the endoplasmic reticulum membrane. It carries out the reaction an N-acylsphinganine + 2 Fe(II)-[cytochrome b5] + O2 + 2 H(+) = an N-acylsphing-4-enine + 2 Fe(III)-[cytochrome b5] + 2 H2O. Its function is as follows. Sphingolipid-delta-4-desaturase required for the biosynthesis of delta-4-unsaturated sphingolipids and derivatives. The polypeptide is Sphingolipid delta(4)-desaturase DES1-like (Oryza sativa subsp. japonica (Rice)).